Consider the following 604-residue polypeptide: NADP-dependent malic enzyme, mitochondrial (604 aa).

The interval 28–50 (SAPAQGCHSKSGPPRPVPLKKRG) is disordered. Residue tyrosine 137 is the Proton donor of the active site. Arginine 190 is an NADP(+) binding site. Lysine 208 (proton acceptor) is an active-site residue. 3 residues coordinate a divalent metal cation: glutamate 280, aspartate 281, and aspartate 304. Position 304 (aspartate 304) interacts with NADP(+). Serine 371 is modified (phosphoserine). An NADP(+)-binding site is contributed by asparagine 443.

This sequence belongs to the malic enzymes family. Requires Mg(2+) as cofactor. It depends on Mn(2+) as a cofactor.

Its subcellular location is the mitochondrion matrix. The catalysed reaction is (S)-malate + NADP(+) = pyruvate + CO2 + NADPH. The enzyme catalyses oxaloacetate + H(+) = pyruvate + CO2. The polypeptide is NADP-dependent malic enzyme, mitochondrial (Me3) (Mus musculus (Mouse)).